The primary structure comprises 519 residues: ATP synthase subunit beta, mitochondrial (519 aa).

The transit peptide at 1 to 21 (MLTRFRSAVLRGAVSITGARA) directs the protein to the mitochondrion. ATP-binding positions include 184–191 (GAGVGKTV) and Arg-216.

Belongs to the ATPase alpha/beta chains family. As to quaternary structure, F-type ATPases have 2 components, F(1) - the catalytic core - and F(o) - the membrane proton channel. F(1) has five subunits: alpha(3), beta(3), gamma(1), delta(1), epsilon(1), plus the additional subunit P18 (Tb427.05.1710) that is not present in F(1)F(o) ATP synthase from metazoa. Subunit P18 (Tb927.5.1710) interacts with the alpha subunit with a 1:1 stoichiometry; the interaction is direct. Subunit gamma is part of the central stalk. F(o) has three main subunits: a, b and c. The trypanosomal ATPase complex contains additional subunits that are not present in the F(1)F(o) ATP synthase from metazoa.

The protein localises to the mitochondrion. It localises to the mitochondrion inner membrane. It carries out the reaction ATP + H2O + 4 H(+)(in) = ADP + phosphate + 5 H(+)(out). In terms of biological role, mitochondrial membrane ATP synthase (F(1)F(o) ATP synthase) produces ATP from ADP in the presence of a proton gradient across the membrane which is generated by electron transport complexes of the respiratory chain. F-type ATPases consist of two structural domains, F(1) - containing the extramembraneous catalytic core, and F(o) - containing the membrane proton channel, linked together by a central stalk and a peripheral stalk. During catalysis, ATP synthesis in the catalytic domain of F(1) is coupled via a rotary mechanism of the central stalk subunits to proton translocation. Subunits alpha and beta form the catalytic core in F(1). Rotation of the central stalk against the surrounding alpha(3)beta(3) subunits leads to hydrolysis of ATP in three separate catalytic sites on the beta subunits. Contrary to the procyclic, insect form that requires F(1)F(o) ATP synthase for ATP synthesis, the bloodstream form relies on ATP hydrolysis by F(1)F(o) ATP synthase to maintain its mitochondrial membrane potential. This Trypanosoma brucei brucei protein is ATP synthase subunit beta, mitochondrial.